The chain runs to 701 residues: Polyribonucleotide nucleotidyltransferase (701 aa).

Positions 487 and 493 each coordinate Mg(2+). In terms of domain architecture, KH spans 553–612 (PRLYTLRINPDKIRDVIGKGGSVIRALTEETGTSIDIAEDGLITIASVSAEGAEEAKRRI). An S1 motif domain is found at 622 to 692 (GKIYEGTVVK…ERGRIRLSIK (71 aa)).

Belongs to the polyribonucleotide nucleotidyltransferase family. Mg(2+) is required as a cofactor.

Its subcellular location is the cytoplasm. It catalyses the reaction RNA(n+1) + phosphate = RNA(n) + a ribonucleoside 5'-diphosphate. Functionally, involved in mRNA degradation. Catalyzes the phosphorolysis of single-stranded polyribonucleotides processively in the 3'- to 5'-direction. The chain is Polyribonucleotide nucleotidyltransferase from Laribacter hongkongensis (strain HLHK9).